The following is a 362-amino-acid chain: Microfibril-associated glycoprotein 3 (362 aa).

Residues 1–18 (MKLHCCLFTLVASIIVPA) form the signal peptide. Over 19–147 (AFVLEDVDFD…LRVIFTSGDM (129 aa)) the chain is Extracellular. N-linked (GlcNAc...) asparagine glycosylation is found at Asn36, Asn41, and Asn110. The Ig-like C2-type domain maps to 45 to 137 (PSSFELSASS…SPIRASYSVT (93 aa)). Cys73 and Cys124 form a disulfide bridge. A helical membrane pass occupies residues 148–170 (SVYYMIVCLIAFTITLILNVTRL). Topologically, residues 171 to 362 (CMMSSHLRKT…KDGAYENCQL (192 aa)) are cytoplasmic. 2 disordered regions span residues 285–306 (VINPEMGRSNSPGGDSDDGSLN) and 323–350 (ETKSIDTESQGSSHFSPPDDIGSAESNC). Polar residues predominate over residues 323 to 337 (ETKSIDTESQGSSHF).

Glycosylated.

The protein resides in the cell membrane. Functionally, component of the elastin-associated microfibrils. This Homo sapiens (Human) protein is Microfibril-associated glycoprotein 3 (MFAP3).